The chain runs to 252 residues: Large ribosomal subunit protein uL4 (252 aa).

This sequence belongs to the universal ribosomal protein uL4 family. As to quaternary structure, part of the 50S ribosomal subunit.

Functionally, one of the primary rRNA binding proteins, this protein initially binds near the 5'-end of the 23S rRNA. It is important during the early stages of 50S assembly. It makes multiple contacts with different domains of the 23S rRNA in the assembled 50S subunit and ribosome. Its function is as follows. Forms part of the polypeptide exit tunnel. The sequence is that of Large ribosomal subunit protein uL4 from Methanococcus aeolicus (strain ATCC BAA-1280 / DSM 17508 / OCM 812 / Nankai-3).